Reading from the N-terminus, the 529-residue chain is Putative cysteine ligase BshC (529 aa).

Residues 450-485 (VKQTKGLENLEKRLLKAQKRNLSDQLQRVIDLQCEL) adopt a coiled-coil conformation.

The protein belongs to the BshC family.

The protein is Putative cysteine ligase BshC of Flavobacterium johnsoniae (strain ATCC 17061 / DSM 2064 / JCM 8514 / BCRC 14874 / CCUG 350202 / NBRC 14942 / NCIMB 11054 / UW101) (Cytophaga johnsonae).